The following is a 554-amino-acid chain: Valerianol synthase TPS1F (554 aa).

Mg(2+) is bound by residues aspartate 307 and aspartate 311. Positions valine 326 to aspartate 330 match the DDXXD motif motif. The Mg(2+) site is built by aspartate 452, serine 456, and glutamate 460.

Belongs to the terpene synthase family. Mg(2+) is required as a cofactor.

The enzyme catalyses (2E,6E)-farnesyl diphosphate + H2O = valerianol + diphosphate. It functions in the pathway secondary metabolite biosynthesis; terpenoid biosynthesis. In terms of biological role, terpene synthase that catalyzes the biosynthesis of the terpene valerianol, which is a volatile compound of floral scent. The polypeptide is Valerianol synthase TPS1F (Camellia hiemalis (Camellia)).